The following is a 990-amino-acid chain: Putative ariadne-like RING finger protein R811 (990 aa).

The VWFA domain maps to 8-201 (DLAIVVDATG…IITQTTIKLL (194 aa)). Residues 797–990 (EKGLCMICFN…GGAFEYDQDD (194 aa)) form a TRIAD supradomain region. Cys-801, Cys-804, Cys-827, and Cys-830 together coordinate Zn(2+). The segment at 801–854 (CMICFNEFSKSNLRQICGRKVCQSVACYDCMKSWYGENKVGDLIHVNALTCPFC) adopts an RING-type 1 zinc-finger fold. The IBR-type zinc finger occupies 855–903 (KQCPMFNILAAFNRQVCAMVRTNNSFDIDWWYGWCLKCFQPKKVVEKEC). The Zn(2+) site is built by Cys-930 and Cys-935. The RING-type 2; atypical zinc-finger motif lies at 930–961 (CPNSLCKIPIIKDGGCNHMECTACKKHFCWLC). Cys-945 is an active-site residue. 2 residues coordinate Zn(2+): Cys-950 and Cys-953.

The chain is Putative ariadne-like RING finger protein R811 from Acanthamoeba polyphaga (Amoeba).